The following is a 347-amino-acid chain: D-alanine--D-alanine ligase (347 aa).

One can recognise an ATP-grasp domain in the interval 131-333 (KRVLESAGIA…YPELIERLVD (203 aa)). Residue 161–216 (EEKLAYPVFTKPSNMGSSVGISKSENQEELRQALKLAFRYDSRVLVEQGVNAREIE) coordinates ATP. Residues D287, E300, and N302 each contribute to the Mg(2+) site.

It belongs to the D-alanine--D-alanine ligase family. Requires Mg(2+) as cofactor. Mn(2+) serves as cofactor.

The protein localises to the cytoplasm. It catalyses the reaction 2 D-alanine + ATP = D-alanyl-D-alanine + ADP + phosphate + H(+). Its pathway is cell wall biogenesis; peptidoglycan biosynthesis. Its function is as follows. Cell wall formation. This Streptococcus pneumoniae serotype 19F (strain G54) protein is D-alanine--D-alanine ligase.